The sequence spans 242 residues: Invasion chromosome antigen R (242 aa).

It is found in the secreted. In terms of biological role, may contribute to pathogenesis, although some of its characteristics suggest it is a fossil gene. The polypeptide is Invasion chromosome antigen R (Shigella flexneri serotype 5a (strain M90T)).